Consider the following 3550-residue polypeptide: Zinc finger homeobox protein 4 (3550 aa).

Met-1 carries the N-acetylmethionine modification. Disordered stretches follow at residues 1–54 (METC…LKTD), 426–479 (HLSS…AYSN), and 521–614 (TSSS…IECP). Positions 9–20 (ISRQENGQSTSK) are enriched in polar residues. Composition is skewed to basic and acidic residues over residues 39 to 54 (EPDR…LKTD) and 433 to 451 (KMSE…KEST). Over residues 467-479 (EPGDEDEEDAYSN) the composition is skewed to acidic residues. 2 stretches are compositionally biased toward polar residues: residues 542–553 (GRSNGNVTNSYS) and 566–576 (RDGTTAAPSET). 3 consecutive C2H2-type zinc fingers follow at residues 611-634 (IECP…TMMH), 642-665 (LKCP…KEKH), and 697-721 (FRCE…SDKH). Residues 739–763 (HSAPTPNTSLSGCGTPSPSKPKQKP) are disordered. Residues 742–752 (PTPNTSLSGCG) are compositionally biased toward polar residues. C2H2-type zinc fingers lie at residues 765 to 787 (RRCE…MTSE), 915 to 939 (YQCK…TDKH), 971 to 993 (LKCN…TTNH), and 1019 to 1043 (YYCA…SVKH). The segment at 1100-1142 (KAASEEPSEDAGDPLKPPTVAEDDEKEAHKRDNSEGKISTKDP) is disordered. Basic and acidic residues predominate over residues 1125–1142 (KEAHKRDNSEGKISTKDP). Residue Lys-1165 forms a Glycyl lysine isopeptide (Lys-Gly) (interchain with G-Cter in SUMO2) linkage. 2 C2H2-type zinc fingers span residues 1188–1211 (YQYP…LSQH) and 1217–1240 (ICCP…THLH). Positions 1271–1339 (APEKSEQDPP…EWNKTSSKDV (69 aa)) are disordered. Residues 1297–1326 (VDDKSMSGLEDSKVGVEIKNEEQKPAKEPV) are compositionally biased toward basic and acidic residues. Lys-1315 participates in a covalent cross-link: Glycyl lysine isopeptide (Lys-Gly) (interchain with G-Cter in SUMO2). 2 consecutive C2H2-type zinc fingers follow at residues 1368 to 1390 (YRCN…SQYH) and 1396 to 1419 (TMCT…EAGH). The segment at 1467–1492 (EGKASPVESDGSSIPDDLGLEPKRTL) is disordered. The segment at 1512–1538 (YKCTVCKESFTQKNILLVHYNSVSHLH) adopts a C2H2-type 12 zinc-finger fold. Lys-1562 is covalently cross-linked (Glycyl lysine isopeptide (Lys-Gly) (interchain with G-Cter in SUMO2)). A C2H2-type 13 zinc finger spans residues 1564 to 1588 (YKCSTCSVAYSQSSTLEIHMRSVLH). The interval 1779–1873 (PQLQPQNQQP…CIPPPRIASG (95 aa)) is disordered. Positions 1792–1808 (QQQQPQQQPSKLLKQEQ) are enriched in low complexity. A Glycyl lysine isopeptide (Lys-Gly) (interchain with G-Cter in SUMO2) cross-link involves residue Lys-1805. The segment covering 1823 to 1860 (PSYKEAEEVTEKQEKPKQEFINDTEGLKDSKDIKKQKS) has biased composition (basic and acidic residues). The segment at 1916 to 1939 (LECGICGKLFSNVLILKSHQEHVH) adopts a C2H2-type 14 zinc-finger fold. Positions 1984–2006 (KIPNTVSAPLQAPPPTPPSAPQQ) are disordered. The span at 1994-2003 (QAPPPTPPSA) shows a compositional bias: pro residues. 2 consecutive DNA-binding regions (homeobox) follow at residues 2069–2128 (FKRP…RQRN) and 2166–2225 (KRSS…RKSY). The C2H2-type 15; degenerate zinc finger occupies 2252 to 2276 (YQCKKCNVVFPRIFDLITHQKKQCY). Over residues 2318-2331 (TLVASSGSGTSTPL) the composition is skewed to polar residues. Positions 2318 to 2412 (TLVASSGSGT…SQTPIPSSPL (95 aa)) are disordered. A compositionally biased stretch (basic and acidic residues) spans 2337-2355 (PEPEKNSPKTEYPGEKTKQ). Polar residues predominate over residues 2356–2376 (SDPSLPQGTKSAPSSVLTSSE). Positions 2383–2392 (PQPPTQPPKQ) are enriched in pro residues. Polar residues predominate over residues 2401–2412 (SASQTPIPSSPL). A C2H2-type 16 zinc finger spans residues 2430–2452 (YPCDQCTLAFPTLELWKEHQHMH). A compositionally biased stretch (polar residues) spans 2490–2508 (GSSLTQMPPQTSTAHTTAP). The interval 2490–2545 (GSSLTQMPPQTSTAHTTAPASVAASLKRKLEDKEDNNCSEKEGGNSGEDQHRDKRL) is disordered. Over residues 2517 to 2541 (RKLEDKEDNNCSEKEGGNSGEDQHR) the composition is skewed to basic and acidic residues. Residues 2542–2601 (DKRLRTTITPEQLEILYEKYLLDSNPTRKMLDHIAREVGLKKRVVQVWFQNTRARERKGQ) constitute a DNA-binding region (homeobox 3). The C2H2-type 17 zinc finger occupies 2612–2635 (KRCPFCRALFKAKSALESHIRSRH). Position 2645 is a phosphoserine (Ser-2645). Disordered stretches follow at residues 2746-2791 (AISD…ATTP) and 2810-2866 (HFND…PGHK). Over residues 2781–2791 (LDSLQKPATTP) the composition is skewed to polar residues. The segment covering 2811–2820 (FNDKDGDHDQ) has biased composition (basic and acidic residues). The segment covering 2843–2855 (PSSPNPFGSSNPF) has biased composition (low complexity). A DNA-binding region (homeobox 4) is located at residues 2865-2924 (HKRFRTQMSNLQLKVLKACFSDYRTPTMQECEMLGNEIGLPKRVVQVWFQNARAKERKFK). Residues 2943-2967 (PECTLCGVKYSARLSIRDHIFSKQH) form a C2H2-type 18 zinc finger. Disordered regions lie at residues 3051 to 3156 (PSSL…EEKI) and 3261 to 3318 (QDSL…VQLD). Positions 3058-3068 (PQNSNTLTSPG) are enriched in polar residues. A compositionally biased stretch (low complexity) spans 3075-3088 (PSSATSSPALSLSS). The segment covering 3097–3109 (TPPPPPPPPPPPS) has biased composition (pro residues). A compositionally biased stretch (basic and acidic residues) spans 3136-3156 (IKEEESEAIKPEKHPKKEEKI). Lys-3137 participates in a covalent cross-link: Glycyl lysine isopeptide (Lys-Gly) (interchain with G-Cter in SUMO2). Residues 3248–3277 (ALLQQYQQYQQSLQDSLQKQQKQQQEQQQK) are a coiled coil. The segment covering 3261 to 3276 (QDSLQKQQKQQQEQQQ) has biased composition (low complexity). Residues 3298 to 3318 (SETKEEKSTAPESTKEEVQLD) are compositionally biased toward basic and acidic residues. A C2H2-type 19; degenerate zinc finger spans residues 3337 to 3361 (FVCRKCQMMFTDEDATVNHQKSFCY). The segment at 3381–3405 (YQCLACDLALSGNEALSQHLQSSLH) adopts a C2H2-type 20 zinc-finger fold. The disordered stretch occupies residues 3424–3445 (LPHSVCSPPPNTSSTSPSAASS). Low complexity predominate over residues 3435–3445 (TSSTSPSAASS).

It belongs to the krueppel C2H2-type zinc-finger protein family. As to expression, expressed in brain, heart, lung, muscle and small intestine. No expression detected in undifferentiated P19 cells, however, expression was seen following retinoic acid treatment to induce neuronal differentiation. Expressed in undifferentiated C2C12 cells, following induction of muscle differentiation in a low-serum medium, expression levels were decreased.

It is found in the nucleus. Its function is as follows. May play a role in neural and muscle differentiation. May be involved in transcriptional regulation. The protein is Zinc finger homeobox protein 4 (Zfhx4) of Mus musculus (Mouse).